The chain runs to 102 residues: Small ubiquitin-related modifier 1-A (102 aa).

The segment at 1 to 20 is disordered; that stretch reads MSDQEAKPSSEDLGDKKDGG. The 78-residue stretch at 21–98 folds into the Ubiquitin-like domain; the sequence is DYIKLKVIGQ…IEVYQEQTGG (78 aa). Residue Gly98 forms a Glycyl lysine isopeptide (Gly-Lys) (interchain with K-? in acceptor proteins) linkage. A propeptide spanning residues 99 to 102 is cleaved from the precursor; sequence HSTF.

The protein belongs to the ubiquitin family. SUMO subfamily. In terms of assembly, interacts with sae2, ube2i, ranbp2, pias1 and pias2. Covalently attached to a number of proteins including rangap1 and ranbp2. Interacts with sox9 and sox10. In terms of processing, cleavage of precursor form by a sentrin-specific protease is necessary for function.

Its subcellular location is the nucleus membrane. The protein resides in the nucleus speckle. It is found in the cytoplasm. It localises to the nucleus. The protein localises to the PML body. Its subcellular location is the cell membrane. Ubiquitin-like protein that can be covalently attached to proteins as a monomer or a lysine-linked polymer. Covalent attachment via an isopeptide bond to its substrates requires prior activation by the E1 complex sae1-sae2 and linkage to the E2 enzyme ube2i. This post-translational modification on lysine residues of proteins plays a crucial role in a number of cellular processes such as nuclear transport, DNA replication and repair, mitosis and signal transduction. Polymeric sumo1 chains are also susceptible to polyubiquitination which functions as a signal for proteasomal degradation of modified proteins. The polypeptide is Small ubiquitin-related modifier 1-A (sumo1-a) (Xenopus laevis (African clawed frog)).